Reading from the N-terminus, the 266-residue chain is Signal peptidase I (266 aa).

Topologically, residues Met1 to Ser20 are cytoplasmic. Residues Phe21–Val41 traverse the membrane as a helical segment. At Pro42–Ala266 the chain is on the extracellular side. Active-site residues include Ser45 and Lys108.

It belongs to the peptidase S26 family.

The protein resides in the cell membrane. It catalyses the reaction Cleavage of hydrophobic, N-terminal signal or leader sequences from secreted and periplasmic proteins.. This chain is Signal peptidase I (lepB), found in Rickettsia conorii (strain ATCC VR-613 / Malish 7).